The chain runs to 195 residues: Imidazoleglycerol-phosphate dehydratase (195 aa).

This sequence belongs to the imidazoleglycerol-phosphate dehydratase family.

The protein localises to the cytoplasm. It catalyses the reaction D-erythro-1-(imidazol-4-yl)glycerol 3-phosphate = 3-(imidazol-4-yl)-2-oxopropyl phosphate + H2O. It participates in amino-acid biosynthesis; L-histidine biosynthesis; L-histidine from 5-phospho-alpha-D-ribose 1-diphosphate: step 6/9. This is Imidazoleglycerol-phosphate dehydratase from Nitrosomonas eutropha (strain DSM 101675 / C91 / Nm57).